A 328-amino-acid chain; its full sequence is Phosphatidylglycerol--prolipoprotein diacylglyceryl transferase (328 aa).

The next 3 helical transmembrane spans lie at 15-35, 58-78, and 106-126; these read VIQG…ILIS, FMFS…TLVY, and GMAI…IINT. Residue Arg-156 participates in a 1,2-diacyl-sn-glycero-3-phospho-(1'-sn-glycerol) binding. 2 helical membrane-spanning segments follow: residues 242–262 and 289–309; these read GFIF…IEYL and ISMG…WVVV.

Belongs to the Lgt family.

The protein localises to the cell inner membrane. The enzyme catalyses L-cysteinyl-[prolipoprotein] + a 1,2-diacyl-sn-glycero-3-phospho-(1'-sn-glycerol) = an S-1,2-diacyl-sn-glyceryl-L-cysteinyl-[prolipoprotein] + sn-glycerol 1-phosphate + H(+). Its pathway is protein modification; lipoprotein biosynthesis (diacylglyceryl transfer). Its function is as follows. Catalyzes the transfer of the diacylglyceryl group from phosphatidylglycerol to the sulfhydryl group of the N-terminal cysteine of a prolipoprotein, the first step in the formation of mature lipoproteins. The chain is Phosphatidylglycerol--prolipoprotein diacylglyceryl transferase from Borrelia garinii subsp. bavariensis (strain ATCC BAA-2496 / DSM 23469 / PBi) (Borreliella bavariensis).